A 247-amino-acid chain; its full sequence is PF03932 family protein CutC (247 aa).

This sequence belongs to the CutC family.

Its subcellular location is the cytoplasm. The protein is PF03932 family protein CutC of Aliivibrio fischeri (strain MJ11) (Vibrio fischeri).